A 217-amino-acid chain; its full sequence is MRLRKKWWARPEIEASDKFADEPKELRGKWNKEFNNNNDIHLELGCGRGGFISQLVEKNKDINYVGIDLKDEVIVYAIRKVKEKEEEVKREFKNIKFVTMNIMGIAEVFDKNEISKIYINFCNPWPKERHNKRRLTHTKLLTEYKKFLKPNTEIWFKTDDKELFEDSQEYFKESGFNIEYITYDLHNSDFKENIKTEYETKFETMGMKIMFLKARLL.

S-adenosyl-L-methionine-binding residues include Glu43, Asp68, Asn101, and Asn123. Lys127 is a binding site for substrate. An interaction with RNA region spans residues 129–134 (RHNKRR). Substrate-binding positions include Asp159 and 196–199 (TEYE).

This sequence belongs to the class I-like SAM-binding methyltransferase superfamily. TrmB family.

The catalysed reaction is guanosine(46) in tRNA + S-adenosyl-L-methionine = N(7)-methylguanosine(46) in tRNA + S-adenosyl-L-homocysteine. The protein operates within tRNA modification; N(7)-methylguanine-tRNA biosynthesis. Its function is as follows. Catalyzes the formation of N(7)-methylguanine at position 46 (m7G46) in tRNA. The protein is tRNA (guanine-N(7)-)-methyltransferase of Clostridium botulinum (strain Loch Maree / Type A3).